A 252-amino-acid chain; its full sequence is Zinc finger CCCH domain-containing protein 28 (252 aa).

Over residues 1–21 (MSHRRDYGSDAVHVRITHDPP) the composition is skewed to basic and acidic residues. Residues 1–31 (MSHRRDYGSDAVHVRITHDPPPENCFPNSGD) form a disordered region. 2 C3H1-type zinc fingers span residues 71 to 99 (FFKT…HSAE) and 143 to 171 (NWKT…HGPS).

This chain is Zinc finger CCCH domain-containing protein 28, found in Arabidopsis thaliana (Mouse-ear cress).